The following is a 618-amino-acid chain: Methylmalonyl-CoA mutase small subunit (618 aa).

The protein belongs to the methylmalonyl-CoA mutase family. Heterodimer of an alpha and a beta chain. Requires adenosylcob(III)alamin as cofactor.

It catalyses the reaction (R)-methylmalonyl-CoA = succinyl-CoA. It participates in metabolic intermediate metabolism; propanoyl-CoA degradation; succinyl-CoA from propanoyl-CoA: step 3/3. Its function is as follows. Catalyzes the isomerization of succinyl-CoA to methylmalonyl-CoA during synthesis of propionate from tricarboxylic acid-cycle intermediates. The chain is Methylmalonyl-CoA mutase small subunit (mutA) from Porphyromonas gingivalis (strain ATCC BAA-308 / W83).